We begin with the raw amino-acid sequence, 494 residues long: ATP synthase subunit alpha 1 (494 aa).

It belongs to the ATPase alpha/beta chains family. As to quaternary structure, F-type ATPases have 2 components, CF(1) - the catalytic core - and CF(0) - the membrane proton channel. CF(1) has five subunits: alpha(3), beta(3), gamma(1), delta(1), epsilon(1). CF(0) has three main subunits: a(1), b(2) and c(9-12). The alpha and beta chains form an alternating ring which encloses part of the gamma chain. CF(1) is attached to CF(0) by a central stalk formed by the gamma and epsilon chains, while a peripheral stalk is formed by the delta and b chains.

It localises to the cell inner membrane. The enzyme catalyses ATP + H2O + 4 H(+)(in) = ADP + phosphate + 5 H(+)(out). Produces ATP from ADP in the presence of a proton gradient across the membrane. The alpha chain is a regulatory subunit. This chain is ATP synthase subunit alpha 1, found in Hahella chejuensis (strain KCTC 2396).